The following is an 876-amino-acid chain: Leucine--tRNA ligase (876 aa).

Residues 42 to 52 carry the 'HIGH' region motif; that stretch reads PYPSGKLHMGH. The 'KMSKS' region signature appears at 634–638; that stretch reads KMSKS. Lys637 is an ATP binding site.

The protein belongs to the class-I aminoacyl-tRNA synthetase family.

Its subcellular location is the cytoplasm. The enzyme catalyses tRNA(Leu) + L-leucine + ATP = L-leucyl-tRNA(Leu) + AMP + diphosphate. This is Leucine--tRNA ligase from Neisseria gonorrhoeae (strain NCCP11945).